Reading from the N-terminus, the 494-residue chain is Lipopolysaccharide core galacturonosyltransferase RgtB (494 aa).

10 helical membrane-spanning segments follow: residues 9 to 29 (ISWI…VRLA), 74 to 94 (LTAL…LYGL), 104 to 124 (ALVA…FEMQ), 127 to 147 (LTHT…FIRS), 156 to 176 (YLIA…FAIL), 197 to 217 (WRLG…LFWL), 251 to 271 (LALA…IVFG), 291 to 311 (MMLV…AAGI), 316 to 336 (LVPM…AAGV), and 345 to 365 (FIPV…GSVA).

The protein belongs to the glycosyltransferase 83 family.

The protein localises to the cell inner membrane. It participates in bacterial outer membrane biogenesis; LPS core biosynthesis. In terms of biological role, involved in the modification of the lipopolysaccharide (LPS) inner core. Catalyzes the transfer of a galacturonic acid (GalA) residue to the 5-position of the outer Kdo (3-deoxy-D-manno-octulosonic acid) residue of the LPS inner core, using dodecaprenyl phosphate-GalA as the donor substrate. Acts after the other GalA transferase RgtA. The protein is Lipopolysaccharide core galacturonosyltransferase RgtB of Rhizobium johnstonii (strain DSM 114642 / LMG 32736 / 3841) (Rhizobium leguminosarum bv. viciae).